We begin with the raw amino-acid sequence, 580 residues long: NADH-quinone oxidoreductase subunit C/D (580 aa).

Residues 1-171 (MSLDQAIPEA…PPFVLTDRLF (171 aa)) are NADH dehydrogenase I subunit C. Residues 195–580 (ELMVLNFGPH…IDFVMSDVDR (386 aa)) form an NADH dehydrogenase I subunit D region.

This sequence in the N-terminal section; belongs to the complex I 30 kDa subunit family. It in the C-terminal section; belongs to the complex I 49 kDa subunit family. NDH-1 is composed of 13 different subunits. Subunits NuoB, CD, E, F, and G constitute the peripheral sector of the complex.

The protein localises to the cell inner membrane. The enzyme catalyses a quinone + NADH + 5 H(+)(in) = a quinol + NAD(+) + 4 H(+)(out). Functionally, NDH-1 shuttles electrons from NADH, via FMN and iron-sulfur (Fe-S) centers, to quinones in the respiratory chain. The immediate electron acceptor for the enzyme in this species is believed to be ubiquinone. Couples the redox reaction to proton translocation (for every two electrons transferred, four hydrogen ions are translocated across the cytoplasmic membrane), and thus conserves the redox energy in a proton gradient. This Cereibacter sphaeroides (strain KD131 / KCTC 12085) (Rhodobacter sphaeroides) protein is NADH-quinone oxidoreductase subunit C/D.